A 381-amino-acid chain; its full sequence is Chaperone protein DnaJ (381 aa).

Residues 5 to 70 (DYYDVLGVSK…EKKAAYDRFG (66 aa)) enclose the J domain. The segment at 140-218 (GLQKTINVPT…CRGQGRVEKD (79 aa)) adopts a CR-type zinc-finger fold. Zn(2+) contacts are provided by Cys153, Cys156, Cys170, Cys173, Cys192, Cys195, Cys206, and Cys209. 4 CXXCXGXG motif repeats span residues 153–160 (CSSCEGTG), 170–177 (CPTCSGMG), 192–199 (CPTCSGLG), and 206–213 (CKSCRGQG).

Belongs to the DnaJ family. In terms of assembly, homodimer. Zn(2+) is required as a cofactor.

The protein resides in the cytoplasm. Participates actively in the response to hyperosmotic and heat shock by preventing the aggregation of stress-denatured proteins and by disaggregating proteins, also in an autonomous, DnaK-independent fashion. Unfolded proteins bind initially to DnaJ; upon interaction with the DnaJ-bound protein, DnaK hydrolyzes its bound ATP, resulting in the formation of a stable complex. GrpE releases ADP from DnaK; ATP binding to DnaK triggers the release of the substrate protein, thus completing the reaction cycle. Several rounds of ATP-dependent interactions between DnaJ, DnaK and GrpE are required for fully efficient folding. Also involved, together with DnaK and GrpE, in the DNA replication of plasmids through activation of initiation proteins. In Ruegeria pomeroyi (strain ATCC 700808 / DSM 15171 / DSS-3) (Silicibacter pomeroyi), this protein is Chaperone protein DnaJ.